A 359-amino-acid chain; its full sequence is Protein FAM50 homolog (359 aa).

2 disordered regions span residues 122 to 150 (NLDDDEEEEEEDDEDHDKKQLKIKQEDQP) and 339 to 359 (PYDPTKSYDKYTIKDKDKSKK). The span at 123–136 (LDDDEEEEEEDDED) shows a compositional bias: acidic residues. Over residues 137–150 (HDKKQLKIKQEDQP) the composition is skewed to basic and acidic residues.

It belongs to the FAM50 family.

This Drosophila melanogaster (Fruit fly) protein is Protein FAM50 homolog.